We begin with the raw amino-acid sequence, 212 residues long: Deoxyribose-phosphate aldolase (212 aa).

Aspartate 89 serves as the catalytic Proton donor/acceptor. Catalysis depends on lysine 151, which acts as the Schiff-base intermediate with acetaldehyde. The Proton donor/acceptor role is filled by lysine 180.

It belongs to the DeoC/FbaB aldolase family. DeoC type 1 subfamily.

The protein resides in the cytoplasm. The catalysed reaction is 2-deoxy-D-ribose 5-phosphate = D-glyceraldehyde 3-phosphate + acetaldehyde. It participates in carbohydrate degradation; 2-deoxy-D-ribose 1-phosphate degradation; D-glyceraldehyde 3-phosphate and acetaldehyde from 2-deoxy-alpha-D-ribose 1-phosphate: step 2/2. Its function is as follows. Catalyzes a reversible aldol reaction between acetaldehyde and D-glyceraldehyde 3-phosphate to generate 2-deoxy-D-ribose 5-phosphate. The chain is Deoxyribose-phosphate aldolase from Clostridium botulinum (strain Okra / Type B1).